A 175-amino-acid polypeptide reads, in one-letter code: 3-hydroxyanthranilate 3,4-dioxygenase (175 aa).

Arg-45 provides a ligand contact to O2. The Fe cation site is built by His-49, Glu-55, and His-93. Glu-55 serves as a coordination point for substrate. Arg-97 and Glu-107 together coordinate substrate. Residues Cys-122, Cys-125, Cys-159, and Cys-162 each coordinate a divalent metal cation.

It belongs to the 3-HAO family. It depends on Fe(2+) as a cofactor.

It localises to the cytoplasm. It carries out the reaction 3-hydroxyanthranilate + O2 = (2Z,4Z)-2-amino-3-carboxymuconate 6-semialdehyde. It functions in the pathway cofactor biosynthesis; NAD(+) biosynthesis; quinolinate from L-kynurenine: step 3/3. In terms of biological role, catalyzes the oxidative ring opening of 3-hydroxyanthranilate to 2-amino-3-carboxymuconate semialdehyde, which spontaneously cyclizes to quinolinate. This Lodderomyces elongisporus (strain ATCC 11503 / CBS 2605 / JCM 1781 / NBRC 1676 / NRRL YB-4239) (Yeast) protein is 3-hydroxyanthranilate 3,4-dioxygenase.